Consider the following 280-residue polypeptide: Pre-mRNA-splicing factor PRP21 (280 aa).

An SURP motif 1 repeat occupies 11 to 49; sequence DIKTTVNYIKQHGVEFENKLLEDERFSFIKKDDPLHEYY. The segment at 53–72 is disordered; the sequence is MNEPTDTVSGEDNDRKSERE. The SURP motif 2 repeat unit spans residues 95 to 135; the sequence is VIKLTARYYAKDKSIVEQMISKDGEARLNFMNSSHPLHKTF. 2 stretches are compositionally biased toward basic and acidic residues: residues 246 to 261 and 269 to 280; these read EKIV…GDSK and AVGETRLKKSKK. Positions 246 to 280 are disordered; it reads EKIVSDQGKQKGGDSKGKKRKIRAVGETRLKKSKK.

Belongs to the CWC complex (or CEF1-associated complex), a spliceosome sub-complex reminiscent of a late-stage spliceosome composed of the U2, U5 and U6 snRNAs and at least BUD13, BUD31, BRR2, CDC40, CEF1, CLF1, CUS1, CWC2, CWC15, CWC21, CWC22, CWC23, CWC24, CWC25, CWC27, ECM2, HSH155, IST3, ISY1, LEA1, MSL1, NTC20, PRP8, PRP9, PRP11, PRP19, PRP21, PRP22, PRP45, PRP46, SLU7, SMB1, SMD1, SMD2, SMD3, SMX2, SMX3, SNT309, SNU114, SPP2, SYF1, SYF2, RSE1 and YJU2.

The protein resides in the nucleus. Functionally, mRNA splicing factors, PRP9, PRP11, and PRP21, are necessary for binding of the U2 snRNP to the pre-mRNA in an early step of spliceosome assembly. The protein is Pre-mRNA-splicing factor PRP21 (PRP21) of Saccharomyces cerevisiae (strain ATCC 204508 / S288c) (Baker's yeast).